Consider the following 489-residue polypeptide: Dipeptide and tripeptide permease B (489 aa).

The Cytoplasmic portion of the chain corresponds to 1-27 (MNTTAPTGLLQQPRPFFMIFFVELWER). The chain crosses the membrane as a helical span at residues 28-48 (FGYYGVQGILAVFFVKQLGFS). Topologically, residues 49-52 (QEQA) are periplasmic. Residues 53–73 (FITFGAFAALVYGLISIGGYV) form a helical membrane-spanning segment. Over 74–82 (GDHLLGTKR) the chain is Cytoplasmic. Residues 83–103 (TLVLGAIVLAIGYFMTGMSLL) traverse the membrane as a helical segment. The Periplasmic segment spans residues 104–106 (NPD). A helical membrane pass occupies residues 107-127 (LIFIALGTIAVGNGLFKANPA). Topologically, residues 128 to 146 (SLLSKCYQPKDPRLDGAFT) are cytoplasmic. A helical membrane pass occupies residues 147–167 (LFYMSINIGSLLSLSLAPVIA). Residues 168-172 (DKFGY) are Periplasmic-facing. A helical membrane pass occupies residues 173–193 (AVTYNLCGAGLIVALLVYFAC). Residues 194-214 (RGMVKNIGSEPDHKPLRFRNL) lie on the Cytoplasmic side of the membrane. A helical transmembrane segment spans residues 215–235 (LLVLLGTVVMIFLCAWLMHNV). Residue K236 is a topological domain, periplasmic. The chain crosses the membrane as a helical span at residues 237–257 (IANLVLIVLSIVVTIFFFREA). Over 258–267 (FRLDKTGRNK) the chain is Cytoplasmic. The helical transmembrane segment at 268 to 288 (MFVAFILMIEAVLFYILYAQM) threads the bilayer. Topologically, residues 289-315 (PTSLNFFAINNVHHEILGFAINPVSFQ) are periplasmic. A helical transmembrane segment spans residues 316–338 (ALNPFWVVVASPVLAAIYTRLGS). The Cytoplasmic segment spans residues 339–348 (KGKDLTMPMK). A helical transmembrane segment spans residues 349–369 (FTLGMFLCALGFLTAAAGMWF). At 370–379 (ADAQGLTSPW) the chain is on the periplasmic side. The chain crosses the membrane as a helical span at residues 380-400 (FIVLVYLFQSLGELLISALGL). Residues 401–410 (AMVAALVPQH) are Cytoplasmic-facing. A helical membrane pass occupies residues 411 to 431 (LMGFILGMWFLTQAAAFLLGG). Over 432–454 (YVATFTAVPENITDPLQTLPIYT) the chain is Periplasmic. A helical transmembrane segment spans residues 455–475 (GVFSKIGLVTLAVTVVMAIMV). Residues 476-489 (PWLNRMINTPGTEQ) are Cytoplasmic-facing.

It belongs to the major facilitator superfamily. Proton-dependent oligopeptide transporter (POT/PTR) (TC 2.A.17) family. DtpB subfamily.

The protein resides in the cell inner membrane. Proton-dependent permease that transports di- and tripeptides. This Salmonella typhimurium (strain LT2 / SGSC1412 / ATCC 700720) protein is Dipeptide and tripeptide permease B.